Consider the following 986-residue polypeptide: Replication factor C subunit 1 (986 aa).

A disordered region spans residues 1-95 (MQRGIDSFFK…ALSKLKRHVD (95 aa)). Phosphoserine is present on residues Ser18, Ser28, Ser40, Ser41, Ser48, and Ser58. Thr60 carries the phosphothreonine modification. Phosphoserine occurs at positions 62 and 63. Phosphothreonine is present on Thr71. Phosphoserine is present on residues Ser128, Ser137, Ser149, Ser154, Ser156, Ser164, and Ser194. The span at 136–147 (ESIKEAAPEKKV) shows a compositional bias: basic and acidic residues. 2 disordered regions span residues 136 to 203 (ESIK…ERHE) and 317 to 388 (KQVK…NDVP). The residue at position 197 (Thr197) is a Phosphothreonine. The region spanning 232–322 (GSPDCLSGLT…SGIAKQVKEE (91 aa)) is the BRCT domain. Basic and acidic residues-rich tracts occupy residues 317 to 364 (KQVK…EKHD) and 370 to 385 (VKEE…DKLN). Residue 487–494 (GPPGIGKT) participates in ATP binding. The segment at 913–986 (SEAAGADDDY…ASKSKAKAKK (74 aa)) is disordered. Residues 917–932 (GADDDYLDEGPGEEDG) show a composition bias toward acidic residues. A phosphoserine mark is found at Ser938 and Ser939. The short motif at 955–959 (KAKKR) is the Nuclear localization signal element. The span at 962 to 979 (TSKASGGSKKATSSTASK) shows a compositional bias: low complexity.

This sequence belongs to the activator 1 large subunit family. In terms of assembly, interacts with C-terminus of PCNA.

It is found in the nucleus. Functionally, the elongation of primed DNA templates by DNA polymerase delta and epsilon requires the action of the accessory proteins proliferating cell nuclear antigen (PCNA) and activator 1. This subunit binds to the primer-template junction. The polypeptide is Replication factor C subunit 1 (Gnf1) (Drosophila melanogaster (Fruit fly)).